A 260-amino-acid polypeptide reads, in one-letter code: Small ribosomal subunit protein eS4 (260 aa).

The S4 RNA-binding domain maps to 46-111; sequence VPLLILVRDM…RYRVVMNEHH (66 aa).

This sequence belongs to the eukaryotic ribosomal protein eS4 family.

The chain is Small ribosomal subunit protein eS4 from Methanopyrus kandleri (strain AV19 / DSM 6324 / JCM 9639 / NBRC 100938).